A 390-amino-acid polypeptide reads, in one-letter code: MATLLEQLSTMTVVVADTGDLDAIRKFTPRDATTNPSLILAAAQIPAYQSLIDEALHSSRQLLGNSAAVEEVVHEALDEICVIFGKEILKIVPGRVSTEVDARLSFNTEATIAKAHKLIGLYNDAGITNDRVLIKIASTWEGIKAAEVLEKDGIHCNLTLLFGFSQAVACAEAGVTLISPFVGRILDWYKASTGRDSYAGPEDPGVISVTKIFNYFKTYDYKTEIMGASFRNLDEIIELAGCDLLTISPKLLDQLGSTEAPLKRKLDAVNPVAAESQIHVDKESFESMMRADRMAFEKLDEGIRGFSKAIETLEAQLAHRLAVLEGGAAFCHVVQEIFMLNDLDGDGCITREEWLGSDAVFDALDHDHDGRLLQEDVRSGLGAALALTTA.

Residue lysine 135 is the Schiff-base intermediate with substrate of the active site. EF-hand domains are found at residues 329-364 (AFCHVVQEIFMLNDLDGDGCITREEWLGSDAVFDAL) and 365-388 (DHDHDGRLLQEDVRSGLGAALALT). Ca(2+) is bound by residues aspartate 342, aspartate 344, aspartate 346, cysteine 348, glutamate 353, aspartate 365, aspartate 367, aspartate 369, arginine 371, and aspartate 376.

Belongs to the transaldolase family. Type 1 subfamily.

Its subcellular location is the cytoplasm. It carries out the reaction D-sedoheptulose 7-phosphate + D-glyceraldehyde 3-phosphate = D-erythrose 4-phosphate + beta-D-fructose 6-phosphate. Its pathway is carbohydrate degradation; pentose phosphate pathway; D-glyceraldehyde 3-phosphate and beta-D-fructose 6-phosphate from D-ribose 5-phosphate and D-xylulose 5-phosphate (non-oxidative stage): step 2/3. Its function is as follows. Transaldolase is important for the balance of metabolites in the pentose-phosphate pathway. The protein is Transaldolase of Prochlorococcus marinus (strain MIT 9313).